Consider the following 410-residue polypeptide: Lissencephaly-1 homolog A (410 aa).

In terms of domain architecture, LisH spans Gln-7–Met-39. Residues Thr-56 to Gly-82 adopt a coiled-coil conformation. 7 WD repeats span residues Gly-106–Lys-147, Gly-148–Thr-187, Gly-190–Thr-229, Gly-232–Glu-271, Glu-274–Thr-333, Gly-336–Thr-375, and Ala-378–Arg-410.

Belongs to the WD repeat LIS1/nudF family. In terms of assembly, can self-associate. Component of the cytosolic PAF-AH (I) heterotetrameric enzyme, which is composed of PAFAH1B1 (beta), PAFAH1B2 (alpha2) and PAFAH1B3 (alpha1) subunits. The catalytic activity of the enzyme resides in the alpha1 (PAFAH1B3) and alpha2 (PAFAH1B2) subunits, whereas the beta subunit (PAFAH1B1) has regulatory activity. Trimer formation is not essential for the catalytic activity. Interacts with dynein, dynactin, nde1 and ndel1.

The protein localises to the cytoplasm. It is found in the cytoskeleton. Its subcellular location is the microtubule organizing center. It localises to the centrosome. Regulatory subunit (beta subunit) of the cytosolic type I platelet-activating factor (PAF) acetylhydrolase (PAF-AH (I)), an enzyme that catalyzes the hydrolyze of the acetyl group at the sn-2 position of PAF and its analogs and participates in PAF inactivation. Regulates the PAF-AH (I) activity in a catalytic dimer composition-dependent manner. Positively regulates the activity of the minus-end directed microtubule motor protein dynein. May enhance dynein-mediated microtubule sliding by targeting dynein to the microtubule plus end. Required for several dynein- and microtubule-dependent processes such as the maintenance of Golgi integrity, the peripheral transport of microtubule fragments and the coupling of the nucleus and centrosome. May be required for proliferation of neuronal precursors and neuronal migration. The protein is Lissencephaly-1 homolog A (pafah1b1-1) of Salmo salar (Atlantic salmon).